We begin with the raw amino-acid sequence, 268 residues long: Bis(5'-nucleosyl)-tetraphosphatase, symmetrical (268 aa).

This sequence belongs to the Ap4A hydrolase family.

The enzyme catalyses P(1),P(4)-bis(5'-adenosyl) tetraphosphate + H2O = 2 ADP + 2 H(+). Functionally, hydrolyzes diadenosine 5',5'''-P1,P4-tetraphosphate to yield ADP. This Vibrio campbellii (strain ATCC BAA-1116) protein is Bis(5'-nucleosyl)-tetraphosphatase, symmetrical.